The sequence spans 349 residues: MENVNMVKSKAALLKKFSEPLSIEDVNIPEPQGEEVLIRIGGAGVCRTDLRVWKGVEAKQGFRLPIILGHENAGTIVEVGELAKVKKGDNVVVYATWGDLTCRYCREGKFNICKNQIIPGQTTNGGFSEYMLVKSSRWLVKLNSLSPVEAAPLADAGTTSMGAIRQALPFISKFAEPVVIVNGIGGLAVYTIQILKALMKNITIVGISRSKKHRDFALELGADYVSEMKDAESLINKLTDGLGASIAIDLVGTEETTYNLGKLLAQEGAIILVGMEGKRVSLEAFDTAVWNKKLLGSNYGSLNDLEDVVRLSESGKIKPYIIKVPLDDINKAFTNLDEGRVDGRQVITP.

7 residues coordinate Zn(2+): Cys-46, His-70, Asp-99, Cys-102, Cys-105, Cys-113, and Asp-155.

This sequence belongs to the zinc-containing alcohol dehydrogenase family. In terms of assembly, homotetramer. Dimer of dimers. The cofactor is Zn(2+).

It carries out the reaction D-arabinose + NADP(+) = D-arabinono-1,4-lactone + NADPH + H(+). In terms of biological role, participates in a pentose oxidation pathway that converts D-arabinose to 2-oxoglutarate. Catalyzes the NADP-dependent conversion of D-arabinose to D-arabinono-1,4-lactone. In vitro, can also use L-fucose, L-galactose and D-ribose. Shows highest activity with L-fucose, in combinaison with NAD, and lower activity toward L-galactose and D-ribose. When acting on its physiological substrate, D-arabinose, shows a clear preference for NADP over NAD. The chain is D-arabinose 1-dehydrogenase (NADP(+)) from Saccharolobus solfataricus (strain ATCC 35092 / DSM 1617 / JCM 11322 / P2) (Sulfolobus solfataricus).